The sequence spans 363 residues: Chorismate synthase (363 aa).

2 residues coordinate NADP(+): Arg-48 and Arg-54. Residues 125-127 (RSS), 237-238 (NA), Gly-277, 292-296 (KPTSS), and Arg-318 contribute to the FMN site.

It belongs to the chorismate synthase family. Homotetramer. Requires FMNH2 as cofactor.

The catalysed reaction is 5-O-(1-carboxyvinyl)-3-phosphoshikimate = chorismate + phosphate. It functions in the pathway metabolic intermediate biosynthesis; chorismate biosynthesis; chorismate from D-erythrose 4-phosphate and phosphoenolpyruvate: step 7/7. Functionally, catalyzes the anti-1,4-elimination of the C-3 phosphate and the C-6 proR hydrogen from 5-enolpyruvylshikimate-3-phosphate (EPSP) to yield chorismate, which is the branch point compound that serves as the starting substrate for the three terminal pathways of aromatic amino acid biosynthesis. This reaction introduces a second double bond into the aromatic ring system. This is Chorismate synthase from Pseudomonas paraeruginosa (strain DSM 24068 / PA7) (Pseudomonas aeruginosa (strain PA7)).